A 224-amino-acid chain; its full sequence is 7-cyano-7-deazaguanine synthase (224 aa).

9-19 contributes to the ATP binding site; it reads ISGGMDSTLCA. 4 residues coordinate Zn(2+): Cys190, Cys198, Cys201, and Cys204.

The protein belongs to the QueC family. Requires Zn(2+) as cofactor.

The catalysed reaction is 7-carboxy-7-deazaguanine + NH4(+) + ATP = 7-cyano-7-deazaguanine + ADP + phosphate + H2O + H(+). Its pathway is purine metabolism; 7-cyano-7-deazaguanine biosynthesis. In terms of biological role, catalyzes the ATP-dependent conversion of 7-carboxy-7-deazaguanine (CDG) to 7-cyano-7-deazaguanine (preQ(0)). The sequence is that of 7-cyano-7-deazaguanine synthase from Campylobacter jejuni subsp. jejuni serotype O:6 (strain 81116 / NCTC 11828).